Here is a 928-residue protein sequence, read N- to C-terminus: MGEDFKKTGYLFGGNAVFVEELYKQYLANPASVDQTWQEFFAGIKDNNTLLNKSTAKIIIPDEIKKESLNNNLSSEDLNSLKAKEMINAYRKHAHYLANLDPLGLELRKTKNDLKLNIETFGLDSGQLEENINITDEFVGTWNCKLSELVTKFDKVYTGSIGVEFEQIENVAGKNWLYNKLESEVTFSSEDKKTILNDLVEVEGFEQYLHTKFPGAKRFSIEGGDASIVAMSKAIDLSMHQGVSEIVIGMAHRGRLNTLTKVVGKPYKAVIADFISGSVFPDELNVSGDVKYHLGYSSDRTLEDKKIHLSLADNPSHLEAVNPIVAGKVRAKQDILGDTKRSKVKAILVHGDAAFCGQGVVAESLSMSPLAAYDIGGILHFVINNQLGFTANAADTRASRYSTEFAKIIAAPILHVNGDDIEAVLKATNIAVEYRQKFGKDVVVEIICYRKYGHNEGDEPMYTQGKMYNIIKNKLTPGNIYANELVKSGVIDNNYFAKLKEEFKAKLDKEYEQAKSYKQEAHFLGGLWQGISRTRTQATITGISKKTLHDLGTKLCEIPKDFAVNPKLVKLFEARKATLTADQPIDWATAEQLAFASLLASGTNIRLTGQDSGRGTFSHRHSVLHNQIDGTTYIPLNNLSKEQAKYEVADSNLSEYAVLGFEYGYSLANPKNLVLWEAQFGDFANGAQIIFDQFISSSETKWLRMSGLVVLLPHAFEGQGPEHSSARLERFLQLAAENNMYVTYPTTPASIFHLLRRQILDDTRKPLIVMSPKSLLRHKYAVSKLDELGENTTFLPVLDEVTKVDTNNITKVILCSGKVYYDLFEMRGNNSNIAIIRLEQLYPFEKKLVASLLKKYNRTQEFIWCQEEPKNMGTWCYIVSHLNDALKEAGIKNEFKYVGREESASPAVGSLQVHNKQQEKLLRTALGI.

This sequence belongs to the alpha-ketoglutarate dehydrogenase family. In terms of assembly, homodimer. Part of the 2-oxoglutarate dehydrogenase (OGDH) complex composed of E1 (2-oxoglutarate dehydrogenase), E2 (dihydrolipoamide succinyltransferase) and E3 (dihydrolipoamide dehydrogenase); the complex contains multiple copies of the three enzymatic components (E1, E2 and E3). Thiamine diphosphate is required as a cofactor.

It catalyses the reaction N(6)-[(R)-lipoyl]-L-lysyl-[protein] + 2-oxoglutarate + H(+) = N(6)-[(R)-S(8)-succinyldihydrolipoyl]-L-lysyl-[protein] + CO2. In terms of biological role, E1 component of the 2-oxoglutarate dehydrogenase (OGDH) complex which catalyzes the decarboxylation of 2-oxoglutarate, the first step in the conversion of 2-oxoglutarate to succinyl-CoA and CO(2). This is 2-oxoglutarate dehydrogenase E1 component (sucA) from Rickettsia conorii (strain ATCC VR-613 / Malish 7).